Consider the following 242-residue polypeptide: ATP synthase subunit b (242 aa).

2 consecutive transmembrane segments (helical) span residues 8-28 and 87-107; these read VLPF…ASAP and LMDL…LIKF.

It belongs to the ATPase B chain family. As to quaternary structure, F-type ATPases have 2 components, F(1) - the catalytic core - and F(0) - the membrane proton channel. F(1) has five subunits: alpha(3), beta(3), gamma(1), delta(1), epsilon(1). F(0) has three main subunits: a(1), b(2) and c(10-14). The alpha and beta chains form an alternating ring which encloses part of the gamma chain. F(1) is attached to F(0) by a central stalk formed by the gamma and epsilon chains, while a peripheral stalk is formed by the delta and b chains.

It localises to the cell inner membrane. Its function is as follows. F(1)F(0) ATP synthase produces ATP from ADP in the presence of a proton or sodium gradient. F-type ATPases consist of two structural domains, F(1) containing the extramembraneous catalytic core and F(0) containing the membrane proton channel, linked together by a central stalk and a peripheral stalk. During catalysis, ATP synthesis in the catalytic domain of F(1) is coupled via a rotary mechanism of the central stalk subunits to proton translocation. Component of the F(0) channel, it forms part of the peripheral stalk, linking F(1) to F(0). The protein is ATP synthase subunit b of Desulfotalea psychrophila (strain LSv54 / DSM 12343).